The sequence spans 159 residues: Succinate dehydrogenase [ubiquinone] cytochrome b small subunit, mitochondrial (159 aa).

The N-terminal 30 residues, 1-30, are a transit peptide targeting the mitochondrion; sequence MLQTRLGLGALRQGRLLFAVKSFSTTSVAK. At 31–65 the chain is on the mitochondrial matrix side; it reads IFPPPPQTIKGTVNDAAVFPHHSKLHGSYHWDFER. A helical membrane pass occupies residues 66-82; the sequence is IIAIAMVPQVMIPLFTG. The Mitochondrial intermembrane portion of the chain corresponds to 83–89; it reads TSHPLMD. Residues 90 to 109 traverse the membrane as a helical segment; that stretch reads AALACTLITHAHLGFESCVI. Histidine 99 serves as a coordination point for heme. Topologically, residues 110–122 are mitochondrial matrix; the sequence is DYFPARRFKKLSP. Tyrosine 111 provides a ligand contact to a ubiquinone. Residues 123 to 140 form a helical membrane-spanning segment; it reads LMHWILRGCTVLTLIGVY. Residues 141–159 are Mitochondrial intermembrane-facing; that stretch reads EFNTNDIGLTEGIKKLWKS.

It belongs to the CybS family. Forms part of complex II containing four subunits: a flavoprotein (FP), an iron-sulfur protein (IP) and a cytochrome b composed of a large and a small subunit.

Its subcellular location is the mitochondrion inner membrane. It functions in the pathway carbohydrate metabolism; tricarboxylic acid cycle. Membrane-anchoring subunit of succinate dehydrogenase (SDH) that is involved in complex II of the mitochondrial electron transport chain and is responsible for transferring electrons from succinate to ubiquinone (coenzyme Q). This is Succinate dehydrogenase [ubiquinone] cytochrome b small subunit, mitochondrial (sdh4) from Schizosaccharomyces pombe (strain 972 / ATCC 24843) (Fission yeast).